The following is a 367-amino-acid chain: tRNA pseudouridine synthase D (367 aa).

Catalysis depends on aspartate 80, which acts as the Nucleophile. The TRUD domain occupies 156 to 316; it reads GIPNWFGEQR…LKQERRALRL (161 aa).

This sequence belongs to the pseudouridine synthase TruD family.

It catalyses the reaction uridine(13) in tRNA = pseudouridine(13) in tRNA. In terms of biological role, responsible for synthesis of pseudouridine from uracil-13 in transfer RNAs. The sequence is that of tRNA pseudouridine synthase D from Xanthomonas campestris pv. campestris (strain B100).